A 457-amino-acid chain; its full sequence is Protein translocase subunit SecY (457 aa).

A run of 10 helical transmembrane segments spans residues I17 to G37, I75 to F95, L120 to M140, V163 to G183, I195 to F215, I230 to I250, V287 to L307, V326 to T346, L386 to L406, and V412 to M432.

It belongs to the SecY/SEC61-alpha family. As to quaternary structure, component of the Sec protein translocase complex. Heterotrimer consisting of SecY, SecE and SecG subunits. The heterotrimers can form oligomers, although 1 heterotrimer is thought to be able to translocate proteins. Interacts with the ribosome. Interacts with SecDF, and other proteins may be involved. Interacts with SecA.

Its subcellular location is the cell inner membrane. In terms of biological role, the central subunit of the protein translocation channel SecYEG. Consists of two halves formed by TMs 1-5 and 6-10. These two domains form a lateral gate at the front which open onto the bilayer between TMs 2 and 7, and are clamped together by SecE at the back. The channel is closed by both a pore ring composed of hydrophobic SecY resides and a short helix (helix 2A) on the extracellular side of the membrane which forms a plug. The plug probably moves laterally to allow the channel to open. The ring and the pore may move independently. In Chlamydia muridarum (strain MoPn / Nigg), this protein is Protein translocase subunit SecY.